We begin with the raw amino-acid sequence, 139 residues long: Putative pre-16S rRNA nuclease (139 aa).

This sequence belongs to the YqgF nuclease family.

The protein localises to the cytoplasm. In terms of biological role, could be a nuclease involved in processing of the 5'-end of pre-16S rRNA. This is Putative pre-16S rRNA nuclease from Streptococcus gordonii (strain Challis / ATCC 35105 / BCRC 15272 / CH1 / DL1 / V288).